A 73-amino-acid polypeptide reads, in one-letter code: Biotin/lipoyl attachment protein (73 aa).

The Biotinyl-binding domain maps to 2 to 69 (TVSIQMAGNL…NEGDVLLELS (68 aa)). Lys-35 is subject to N6-biotinyllysine; alternate. Residue Lys-35 is modified to N6-lipoyllysine; alternate.

In terms of processing, can be both biotinylated and lipoylated on Lys-35 upon overexpression in E.coli depending on the growth medium; the nature of the modification in situ in B.subtilis is unknown.

This Bacillus subtilis (strain 168) protein is Biotin/lipoyl attachment protein (yngHB).